The chain runs to 1453 residues: Chromatin remodeling regulator CECR2 (1453 aa).

Residues Val170–Gly237 form a disordered region. Residues Thr197–Lys209 show a composition bias toward basic residues. The segment covering Leu210–Glu222 has biased composition (basic and acidic residues). The span at Asn223–Gly234 shows a compositional bias: polar residues. A Phosphoserine modification is found at Ser402. A Bromo domain is found at Phe414 to His518. A Phosphothreonine modification is found at Thr526. Disordered stretches follow at residues Glu536–Phe667, His767–His796, Gly827–Met868, Val884–Tyr1020, Val1046–Arg1072, Leu1131–Gly1308, Met1331–Gln1368, and Gln1396–Ser1453. At Ser551 the chain carries Phosphoserine. Positions Gly637–Gly649 are enriched in polar residues. Residues Glu655–His664 are compositionally biased toward pro residues. Pro residues predominate over residues Pro887–Phe905. Ser983 is subject to Phosphoserine. The span at Gln985–Ala998 shows a compositional bias: basic and acidic residues. The segment covering Ser999–Tyr1020 has biased composition (polar residues). Arg1166 and Arg1172 each carry asymmetric dimethylarginine. 2 stretches are compositionally biased toward low complexity: residues Tyr1173–Gln1187 and Gln1202–Pro1211. Over residues Asn1228–Asp1250 the composition is skewed to polar residues. Over residues Gly1265–Asn1289 the composition is skewed to basic and acidic residues. Position 1280 is a phosphoserine (Ser1280). 2 stretches are compositionally biased toward polar residues: residues Asn1291–Asp1304 and Met1331–His1346. The segment covering Tyr1352–Pro1364 has biased composition (pro residues).

As to quaternary structure, component of the CERF-1 ISWI chromatin remodeling complex (also called the CECR2-containing remodeling factor (CERF) complex) at least composed of CECR2 and SMARCA1. Component of the CERF-5 ISWI chromatin remodeling complex at least composed of CECR2 and SMARCA5/SNF2H. LUZP1 is detected as part of the CERF-1 and CERF-5 complexes in embryonic stem (ES) cells where it is involved in complex stabilization but is not detected in the complexes in the testis. Interacts with CCAR2; CCAR2 may form part of the CERF-1 and/or CEF-5 ISWI chromatin remodeling complexes in ES cells. Interacts with acetylated lysine residues on histone H2A and H3 (in vitro). Interacts with LRPPRC.

It is found in the nucleus. In terms of biological role, regulatory subunit of the ATP-dependent CERF-1 and CERF-5 ISWI chromatin remodeling complexes, which form ordered nucleosome arrays on chromatin and facilitate access to DNA during DNA-templated processes such as DNA replication, transcription, and repair. The complexes do not have the ability to slide mononucleosomes to the center of a DNA template. The CERF-1 ISWI chromatin remodeling complex has a lower ATP hydrolysis rate than the CERF-5 ISWI chromatin remodeling complex. Plays a role in various processes during development: required during embryogenesis for neural tube closure and inner ear development. In adults, required for spermatogenesis, via the formation of ISWI-type chromatin complexes. In histone-modifying complexes, CECR2 recognizes and binds acylated histones: binds histones that are acetylated and/or butyrylated. May also be involved through its interaction with LRPPRC in the integration of cytoskeletal network with vesicular trafficking, nucleocytosolic shuttling, transcription, chromosome remodeling and cytokinesis. The polypeptide is Chromatin remodeling regulator CECR2 (Mus musculus (Mouse)).